Consider the following 470-residue polypeptide: Tubulin gamma chain (470 aa).

Position 144-150 (144-150 (AGGTGSG)) interacts with GTP.

This sequence belongs to the tubulin family.

It localises to the cytoplasm. The protein localises to the cytoskeleton. The protein resides in the microtubule organizing center. It is found in the spindle pole body. In terms of biological role, tubulin is the major constituent of microtubules. The gamma chain is found at microtubule organizing centers (MTOC) such as the spindle poles or the centrosome, suggesting that it is involved in the minus-end nucleation of microtubule assembly. The polypeptide is Tubulin gamma chain (TUB4) (Eremothecium gossypii (strain ATCC 10895 / CBS 109.51 / FGSC 9923 / NRRL Y-1056) (Yeast)).